A 204-amino-acid chain; its full sequence is uncharacterized protein (204 aa).

The helical transmembrane segment at 160 to 180 (GLTVAAIASVVVAGAVTYLVV) threads the bilayer.

This sequence to M.pneumoniae MPN_373 C-terminal region.

The protein localises to the cell membrane. This is an uncharacterized protein from Mycoplasma pneumoniae (strain ATCC 29342 / M129 / Subtype 1) (Mycoplasmoides pneumoniae).